The chain runs to 579 residues: V-type ATP synthase alpha chain (579 aa).

An ATP-binding site is contributed by 227 to 234; sequence GGFGTGKT.

It belongs to the ATPase alpha/beta chains family.

It catalyses the reaction ATP + H2O + 4 H(+)(in) = ADP + phosphate + 5 H(+)(out). Its function is as follows. Produces ATP from ADP in the presence of a proton gradient across the membrane. The V-type alpha chain is a catalytic subunit. The chain is V-type ATP synthase alpha chain from Anaeromyxobacter sp. (strain K).